Reading from the N-terminus, the 350-residue chain is Protein RecA (350 aa).

65 to 72 (GPESSGKT) is an ATP binding site.

Belongs to the RecA family.

It localises to the cytoplasm. Its function is as follows. Can catalyze the hydrolysis of ATP in the presence of single-stranded DNA, the ATP-dependent uptake of single-stranded DNA by duplex DNA, and the ATP-dependent hybridization of homologous single-stranded DNAs. It interacts with LexA causing its activation and leading to its autocatalytic cleavage. In Clostridium tetani (strain Massachusetts / E88), this protein is Protein RecA.